The following is a 119-amino-acid chain: Large ribosomal subunit protein uL14 (119 aa).

The protein belongs to the universal ribosomal protein uL14 family. In terms of assembly, part of the 50S ribosomal subunit. Forms a cluster with proteins L3 and L19. In the 70S ribosome, L14 and L19 interact and together make contacts with the 16S rRNA in bridges B5 and B8.

Functionally, binds to 23S rRNA. Forms part of two intersubunit bridges in the 70S ribosome. In Ehrlichia chaffeensis (strain ATCC CRL-10679 / Arkansas), this protein is Large ribosomal subunit protein uL14.